The following is a 62-amino-acid chain: Dual specificity mitogen-activated protein kinase kinase 3 (62 aa).

The Protein kinase domain occupies 1–62 (GKIAVSIVKA…VAKTMDAGCK (62 aa)).

This sequence belongs to the protein kinase superfamily. STE Ser/Thr protein kinase family. MAP kinase kinase subfamily. Activated by phosphorylation on Ser/Thr catalyzed by MAP kinase kinase kinases.

It carries out the reaction L-seryl-[protein] + ATP = O-phospho-L-seryl-[protein] + ADP + H(+). The catalysed reaction is L-threonyl-[protein] + ATP = O-phospho-L-threonyl-[protein] + ADP + H(+). The enzyme catalyses L-tyrosyl-[protein] + ATP = O-phospho-L-tyrosyl-[protein] + ADP + H(+). Its function is as follows. Catalyzes the concomitant phosphorylation of a threonine and a tyrosine residue in a Thr-Glu-Tyr sequence located in MAP kinases. The chain is Dual specificity mitogen-activated protein kinase kinase 3 (map2k3) from Xenopus laevis (African clawed frog).